The following is a 1131-amino-acid chain: DNA polymerase II large subunit (1131 aa).

It belongs to the archaeal DNA polymerase II family. In terms of assembly, heterodimer of a large subunit and a small subunit.

It carries out the reaction DNA(n) + a 2'-deoxyribonucleoside 5'-triphosphate = DNA(n+1) + diphosphate. The enzyme catalyses Exonucleolytic cleavage in the 3'- to 5'-direction to yield nucleoside 5'-phosphates.. In terms of biological role, possesses two activities: a DNA synthesis (polymerase) and an exonucleolytic activity that degrades single-stranded DNA in the 3'- to 5'-direction. Has a template-primer preference which is characteristic of a replicative DNA polymerase. This Methanococcus vannielii (strain ATCC 35089 / DSM 1224 / JCM 13029 / OCM 148 / SB) protein is DNA polymerase II large subunit.